The chain runs to 428 residues: MAKTVAYFYDPDVGNFHYGAGHPMKPHRLALTHSLVLHYGLYKKMIVFKPYQASQHDMCRFHSEDYIDFLQRVSPTNMQGFTKSLNAFNVGDDCPVFPGLFEFCSRYTGASLQGATQLNNKICDIAINWAGGLHHAKKFEASGFCYVNDIVIGILELLKYHPRVLYIDIDIHHGDGVQEAFYLTDRVMTVSFHKYGNYFFPGTGDMYEVGAESGRYYCLNVPLRDGIDDQSYKHLFQPVINQVVDFYQPTCIVLQCGADSLGCDRLGCFNLSIRGHGECVEYVKSFNIPLLVLGGGGYTVRNVARCWTYETSLLVEEAISEELPYSEYFEYFAPDFTLHPDVSTRIENQNSRQYLDQIRQTIFENLKMLNHAPSVQIHDVPADLLTYDRTDEADAEERGPEENYSRPEAPNEFYDGDHDNDKESDVEI.

Residues 3–316 form a histone deacetylase region; the sequence is KTVAYFYDPD…WTYETSLLVE (314 aa). 1D-myo-inositol 1,4,5,6-tetrakisphosphate contacts are provided by H17, G21, and K25. H135 is an active-site residue. The Zn(2+) site is built by D170, H172, and D259. A 1D-myo-inositol 1,4,5,6-tetrakisphosphate-binding site is contributed by R265. 2 stretches are compositionally biased toward basic and acidic residues: residues 388–405 and 415–428; these read DRTD…ENYS and DGDH…DVEI. The disordered stretch occupies residues 388-428; it reads DRTDEADAEERGPEENYSRPEAPNEFYDGDHDNDKESDVEI. Residue S424 is modified to Phosphoserine.

This sequence belongs to the histone deacetylase family. HD type 1 subfamily. In terms of assembly, interacts with HDAC7 and HDAC9. Interacts with DAXX, KDM4A, HDAC10 and DACH1. Found in a complex with NCOR1 and NCOR2. Component of the N-Cor repressor complex, at least composed of NCOR1, NCOR2, HDAC3, TBL1X, TBL1R, CORO2A and GPS2. Interacts with BCOR, MJD2A/JHDM3A, NRIP1, PRDM6 and SRY. Interacts with BTBD14B. Interacts with GLIS2. Interacts (via the DNA-binding domain) with NR2C1; the interaction recruits phosphorylated NR2C1 to PML bodies for sumoylation. Component of the Notch corepressor complex. Interacts with CBFA2T3 and NKAP. Interacts with APEX1; the interaction is not dependent on the acetylated status of APEX1. Interacts with ZMYND15. Interacts with SMRT/NCOR2 and BCL6 on DNA enhancer elements. Interacts with INSM1. Interacts with XBP1 isoform 1; the interaction occurs in endothelial cell (EC) under disturbed flow. Interacts (via C-terminus) with CCAR2 (via N-terminus). Interacts with and deacetylates MEF2D. Interacts with BEND3. Interacts with NKAPL. Interacts with DHX36; this interaction occurs in a RNA-dependent manner. Interacts weakly with CRY1; this interaction is enhanced in the presence of FBXL3. Interacts with FBXL3 and BMAL1. Interacts with NCOR1. Interacts with RARA. Interacts with SETD5. (Microbial infection) Interacts with human cytomegalovirus (HHV-5) immediate early protein IE1; this interaction decreases histone acetylation and allows transcriptional activation by the virus. Zn(2+) is required as a cofactor. In terms of processing, sumoylated in vitro. Deubiquitinated on 'Lys-63'-linked ubiquitin chains by USP38; leading to a decreased level of histone acetylation. As to expression, widely expressed.

Its subcellular location is the nucleus. The protein localises to the chromosome. The protein resides in the cytoplasm. It is found in the cytosol. The enzyme catalyses N(6)-acetyl-L-lysyl-[histone] + H2O = L-lysyl-[histone] + acetate. The catalysed reaction is N(6)-acetyl-L-lysyl-[protein] + H2O = L-lysyl-[protein] + acetate. It catalyses the reaction N(6)-(2E)-butenoyl-L-lysyl-[protein] + H2O = (2E)-2-butenoate + L-lysyl-[protein]. It carries out the reaction N(6)-(2-hydroxyisobutanoyl)-L-lysyl-[protein] + H2O = 2-hydroxy-2-methylpropanoate + L-lysyl-[protein]. The enzyme catalyses N(6)-[(S)-lactoyl]-L-lysyl-[protein] + H2O = (S)-lactate + L-lysyl-[protein]. Its activity is regulated as follows. Inositol tetraphosphate (1D-myo-inositol 1,4,5,6-tetrakisphosphate) promotes the histone deacetylase activity by acting as an intermolecular glue between HDAC3 and NCOR2, thereby promoting its association with the N-Cor complex, a prerequisite for the histone deacetylase activity. Functionally, histone deacetylase that catalyzes the deacetylation of lysine residues on the N-terminal part of the core histones (H2A, H2B, H3 and H4), and some other non-histone substrates. Histone deacetylation gives a tag for epigenetic repression and plays an important role in transcriptional regulation, cell cycle progression and developmental events. Histone deacetylases act via the formation of large multiprotein complexes, such as N-Cor repressor complex, which activate the histone deacetylase activity. Participates in the BCL6 transcriptional repressor activity by deacetylating the H3 'Lys-27' (H3K27) on enhancer elements, antagonizing EP300 acetyltransferase activity and repressing proximal gene expression. Acts as a molecular chaperone for shuttling phosphorylated NR2C1 to PML bodies for sumoylation. Contributes, together with XBP1 isoform 1, to the activation of NFE2L2-mediated HMOX1 transcription factor gene expression in a PI(3)K/mTORC2/Akt-dependent signaling pathway leading to endothelial cell (EC) survival under disturbed flow/oxidative stress. Regulates both the transcriptional activation and repression phases of the circadian clock in a deacetylase activity-independent manner. During the activation phase, promotes the accumulation of ubiquitinated BMAL1 at the E-boxes and during the repression phase, blocks FBXL3-mediated CRY1/2 ubiquitination and promotes the interaction of CRY1 and BMAL1. The NCOR1-HDAC3 complex regulates the circadian expression of the core clock gene BMAL1 and the genes involved in lipid metabolism in the liver. Also functions as a deacetylase for non-histone targets, such as KAT5, MEF2D, MAPK14, RARA and STAT3. Serves as a corepressor of RARA, mediating its deacetylation and repression, leading to inhibition of RARE DNA element binding. In association with RARA, plays a role in the repression of microRNA-10a and thereby in the inflammatory response. In addition to protein deacetylase activity, also acts as a protein-lysine deacylase by recognizing other acyl groups: catalyzes removal of (2E)-butenoyl (crotonyl), lactoyl (lactyl) and 2-hydroxyisobutanoyl (2-hydroxyisobutyryl) acyl groups from lysine residues, leading to protein decrotonylation, delactylation and de-2-hydroxyisobutyrylation, respectively. Catalyzes decrotonylation of MAPRE1/EB1. Mediates delactylation NBN/NBS1, thereby inhibiting DNA double-strand breaks (DSBs) via homologous recombination (HR). The protein is Histone deacetylase 3 (HDAC3) of Homo sapiens (Human).